The sequence spans 241 residues: Triosephosphate isomerase (241 aa).

9 to 11 contributes to the substrate binding site; the sequence is NWK. The active-site Electrophile is H96. E165 functions as the Proton acceptor in the catalytic mechanism. Substrate is bound by residues G171, S204, and 225–226; that span reads GG.

The protein belongs to the triosephosphate isomerase family. In terms of assembly, homodimer.

The protein resides in the cytoplasm. It carries out the reaction D-glyceraldehyde 3-phosphate = dihydroxyacetone phosphate. It functions in the pathway carbohydrate biosynthesis; gluconeogenesis. The protein operates within carbohydrate degradation; glycolysis; D-glyceraldehyde 3-phosphate from glycerone phosphate: step 1/1. Functionally, involved in the gluconeogenesis. Catalyzes stereospecifically the conversion of dihydroxyacetone phosphate (DHAP) to D-glyceraldehyde-3-phosphate (G3P). The polypeptide is Triosephosphate isomerase (Nostoc sp. (strain PCC 7120 / SAG 25.82 / UTEX 2576)).